The primary structure comprises 719 residues: Ribosomal RNA large subunit methyltransferase K/L (719 aa).

Residues 43–154 form the THUMP domain; sequence TQYRVLLWTR…REELVISLDL (112 aa).

It belongs to the methyltransferase superfamily. RlmKL family.

Its subcellular location is the cytoplasm. The catalysed reaction is guanosine(2445) in 23S rRNA + S-adenosyl-L-methionine = N(2)-methylguanosine(2445) in 23S rRNA + S-adenosyl-L-homocysteine + H(+). It catalyses the reaction guanosine(2069) in 23S rRNA + S-adenosyl-L-methionine = N(2)-methylguanosine(2069) in 23S rRNA + S-adenosyl-L-homocysteine + H(+). Functionally, specifically methylates the guanine in position 2445 (m2G2445) and the guanine in position 2069 (m7G2069) of 23S rRNA. This Pasteurella multocida (strain Pm70) protein is Ribosomal RNA large subunit methyltransferase K/L.